The following is a 49-amino-acid chain: uncharacterized protein (49 aa).

This is an uncharacterized protein from Bacillus subtilis (strain 168).